Consider the following 353-residue polypeptide: S-adenosylmethionine:tRNA ribosyltransferase-isomerase (353 aa).

This sequence belongs to the QueA family. As to quaternary structure, monomer.

It localises to the cytoplasm. The enzyme catalyses 7-aminomethyl-7-carbaguanosine(34) in tRNA + S-adenosyl-L-methionine = epoxyqueuosine(34) in tRNA + adenine + L-methionine + 2 H(+). Its pathway is tRNA modification; tRNA-queuosine biosynthesis. Functionally, transfers and isomerizes the ribose moiety from AdoMet to the 7-aminomethyl group of 7-deazaguanine (preQ1-tRNA) to give epoxyqueuosine (oQ-tRNA). This Paraburkholderia phymatum (strain DSM 17167 / CIP 108236 / LMG 21445 / STM815) (Burkholderia phymatum) protein is S-adenosylmethionine:tRNA ribosyltransferase-isomerase.